A 206-amino-acid polypeptide reads, in one-letter code: 2,3-bisphosphoglycerate-dependent phosphoglycerate mutase (206 aa).

Residues R9–N16, T22–G23, R61, E88–Y91, K99, R115–R116, and G159–N160 each bind substrate. H10 acts as the Tele-phosphohistidine intermediate in catalysis. E88 (proton donor/acceptor) is an active-site residue.

It belongs to the phosphoglycerate mutase family. BPG-dependent PGAM subfamily. In terms of assembly, homodimer.

It catalyses the reaction (2R)-2-phosphoglycerate = (2R)-3-phosphoglycerate. It participates in carbohydrate degradation; glycolysis; pyruvate from D-glyceraldehyde 3-phosphate: step 3/5. Its function is as follows. Catalyzes the interconversion of 2-phosphoglycerate and 3-phosphoglycerate. The chain is 2,3-bisphosphoglycerate-dependent phosphoglycerate mutase from Bartonella henselae (strain ATCC 49882 / DSM 28221 / CCUG 30454 / Houston 1) (Rochalimaea henselae).